The primary structure comprises 142 residues: Large ribosomal subunit protein uL13 (142 aa).

The protein belongs to the universal ribosomal protein uL13 family. Part of the 50S ribosomal subunit.

This protein is one of the early assembly proteins of the 50S ribosomal subunit, although it is not seen to bind rRNA by itself. It is important during the early stages of 50S assembly. This is Large ribosomal subunit protein uL13 from Burkholderia pseudomallei (strain 1106a).